A 1164-amino-acid chain; its full sequence is DNA-directed RNA polymerase subunit beta (1164 aa).

It belongs to the RNA polymerase beta chain family. As to quaternary structure, the RNAP catalytic core consists of 2 alpha, 1 beta, 1 beta' and 1 omega subunit. When a sigma factor is associated with the core the holoenzyme is formed, which can initiate transcription.

It carries out the reaction RNA(n) + a ribonucleoside 5'-triphosphate = RNA(n+1) + diphosphate. DNA-dependent RNA polymerase catalyzes the transcription of DNA into RNA using the four ribonucleoside triphosphates as substrates. The chain is DNA-directed RNA polymerase subunit beta from Saccharopolyspora erythraea (strain ATCC 11635 / DSM 40517 / JCM 4748 / NBRC 13426 / NCIMB 8594 / NRRL 2338).